The sequence spans 493 residues: MEQREIILLGLAALAVTYQVIVWIYNAWFHPLSGYPGPKLFGASYLPGLYHRIRGDYVLVHTALHERFGEVIRVSPNELSYINPQAWKDITGQGSGRQDMEKDPLSFGRPMPNAPSIFNAHRMDHSRIRRTMSHAFSASALRRQESLIQSHVKMMIQCLREHNEEVVDMVSWYNFTTFDMFGDLAFGESFGCLTNSLYHPWVKMLIMSMKAGYFIIQAQKYPIFEKVLMSFIPRMMRQRRRDHLALTQAKLAKRMAKPEERPDFLSFILRHQDEATGMSLPELEINASTLIVAGSETTATLLSGCTYYLLRNPRVMEKLLNEVRTTFKSEDEIDITTVNGLKYMLAVLDEALRVYPPAPGNFHRLVPKEGSVICEKFVPGETQVSVCHYAAYHSPCNFHQPDEFIPERFLGESKFENDRRDVLQPFGTGSRACLGRNLAYFEMRLILTHVLWNFDLELMPQSKYWANQKVFAIWDKPELYVKLKPRAGLEVRA.

The helical transmembrane segment at glutamate 5 to tyrosine 25 threads the bilayer. Asparagine 174 and asparagine 286 each carry an N-linked (GlcNAc...) asparagine glycan. Cysteine 433 serves as a coordination point for heme.

It belongs to the cytochrome P450 family. It depends on heme as a cofactor.

Its subcellular location is the membrane. The enzyme catalyses asperterpenoid A + reduced [NADPH--hemoprotein reductase] + O2 = asperterpenoid C + oxidized [NADPH--hemoprotein reductase] + H2O + H(+). It participates in secondary metabolite biosynthesis; terpenoid biosynthesis. Functionally, cytochrome P450 monooxygenase; part of the gene cluster that mediates the biosynthesis of the asperterpenoids, sesterterpenes that exhibit anti-tuberculosis activity. The first step of the pathway is performed by the sesterterpene synthase astC that possesses both prenyl transferase and terpene cyclase activity, converting isopentenyl diphosphate and dimethylallyl diphosphate into geranylfarnesyl diphosphate (GFPP) and further converting GFPP into preasperterpenoid A, respectively. The cytochrome P450 monooxygenase astB then dually oxidizes preasperterpenoid A to produce asperterpenoid A along with a minor product, asperterpenoid B. Finally, the cytochrome P450 monooxygenase astA converts asperterpenoid A into asperterpenoid C. The protein is Cytochrome P450 monooxygenase astA of Talaromyces wortmannii (Penicillium wortmannii).